Reading from the N-terminus, the 680-residue chain is Cytosolic endo-beta-N-acetylglucosaminidase 1 (680 aa).

Over residues 1 to 15 (MSVAPPAPSPPPFDP) the composition is skewed to pro residues. Positions 1-21 (MSVAPPAPSPPPFDPTKPSTP) are disordered.

The protein belongs to the glycosyl hydrolase 85 family.

The protein localises to the cytoplasm. It is found in the cytosol. The catalysed reaction is an N(4)-(oligosaccharide-(1-&gt;3)-[oligosaccharide-(1-&gt;6)]-beta-D-Man-(1-&gt;4)-beta-D-GlcNAc-(1-&gt;4)-alpha-D-GlcNAc)-L-asparaginyl-[protein] + H2O = an oligosaccharide-(1-&gt;3)-[oligosaccharide-(1-&gt;6)]-beta-D-Man-(1-&gt;4)-D-GlcNAc + N(4)-(N-acetyl-beta-D-glucosaminyl)-L-asparaginyl-[protein]. Functionally, endoglycosidase that releases N-glycans from glycoproteins by cleaving the beta-1,4-glycosidic bond in the N,N'-diacetylchitobiose core. Involved in the production of high-mannose type N-glycans during plant development and fruit maturation. The polypeptide is Cytosolic endo-beta-N-acetylglucosaminidase 1 (Arabidopsis thaliana (Mouse-ear cress)).